The primary structure comprises 217 residues: Octanoyltransferase (217 aa).

Residues 35-214 (DEAGERIWLL…TLPAFLDKLR (180 aa)) enclose the BPL/LPL catalytic domain. Residues 73-80 (RGGRYTYH), 145-147 (AIG), and 158-160 (GFS) contribute to the substrate site. C176 (acyl-thioester intermediate) is an active-site residue.

This sequence belongs to the LipB family.

Its subcellular location is the cytoplasm. It catalyses the reaction octanoyl-[ACP] + L-lysyl-[protein] = N(6)-octanoyl-L-lysyl-[protein] + holo-[ACP] + H(+). Its pathway is protein modification; protein lipoylation via endogenous pathway; protein N(6)-(lipoyl)lysine from octanoyl-[acyl-carrier-protein]: step 1/2. Functionally, catalyzes the transfer of endogenously produced octanoic acid from octanoyl-acyl-carrier-protein onto the lipoyl domains of lipoate-dependent enzymes. Lipoyl-ACP can also act as a substrate although octanoyl-ACP is likely to be the physiological substrate. This is Octanoyltransferase from Sphingopyxis alaskensis (strain DSM 13593 / LMG 18877 / RB2256) (Sphingomonas alaskensis).